The primary structure comprises 392 residues: F-box protein At5g65850 (392 aa).

Positions threonine 29–arginine 78 constitute an F-box domain.

This chain is F-box protein At5g65850, found in Arabidopsis thaliana (Mouse-ear cress).